Consider the following 559-residue polypeptide: Frizzled-5 (559 aa).

A signal peptide spans Met-1–Ala-26. Residues Ala-27–Met-220 are Extracellular-facing. In terms of domain architecture, FZ spans Ser-28 to Tyr-149. 5 disulfides stabilise this stretch: Cys-33–Cys-94, Cys-41–Cys-87, Cys-78–Cys-116, Cys-105–Cys-146, and Cys-109–Cys-133. Asn-47 is a glycosylation site (N-linked (GlcNAc...) asparagine). A glycan (N-linked (GlcNAc...) asparagine) is linked at Asn-150. A helical transmembrane segment spans residues Phe-221 to Val-241. The Cytoplasmic portion of the chain corresponds to Ala-242–Pro-257. Residues Ile-258–Val-278 traverse the membrane as a helical segment. Over Gly-279 to Thr-301 the chain is Extracellular. Residues Ile-302 to Thr-322 form a helical membrane-spanning segment. The Cytoplasmic segment spans residues Phe-323–Gln-343. The chain crosses the membrane as a helical span at residues Tyr-344–Ser-364. Over Ser-365–Gly-387 the chain is Extracellular. The helical transmembrane segment at Phe-388–Phe-408 threads the bilayer. Residues Val-409–Arg-434 lie on the Cytoplasmic side of the membrane. A helical transmembrane segment spans residues Ile-435–Tyr-455. Residues Glu-456 to Ala-483 lie on the Extracellular side of the membrane. Asn-468 carries an N-linked (GlcNAc...) asparagine glycan. Residues Val-484–Trp-504 form a helical membrane-spanning segment. Residues Ser-505 to Val-559 lie on the Cytoplasmic side of the membrane. Residues Lys-507–Trp-512 carry the Lys-Thr-X-X-X-Trp motif, mediates interaction with the PDZ domain of Dvl family members motif. A PDZ-binding motif is present at residues Ser-557–Val-559.

Belongs to the G-protein coupled receptor Fz/Smo family. Expressed in retina.

It is found in the cell membrane. Its subcellular location is the golgi apparatus membrane. Functionally, receptor for Wnt proteins that functions in the canonical Wnt/beta-catenin signaling pathway. The canonical Wnt/beta-catenin signaling pathway leads to the activation of disheveled proteins, inhibition of GSK-3 kinase, nuclear accumulation of beta-catenin and activation of Wnt target genes. A second signaling pathway involving PKC and calcium fluxes has been seen for some family members, but it is not yet clear if it represents a distinct pathway or if it can be integrated in the canonical pathway, as PKC seems to be required for Wnt-mediated inactivation of GSK-3 kinase. Both pathways seem to involve interactions with G-proteins. May be involved in transduction and intercellular transmission of polarity information during tissue morphogenesis and/or in differentiated tissues. This is Frizzled-5 (fzd5) from Xenopus laevis (African clawed frog).